The chain runs to 150 residues: Small ribosomal subunit protein uS11 (150 aa).

The interval 126 to 150 is disordered; it reads GRIEDVTPTPSDSTRRKGGRRGRRL. The span at 141–150 shows a compositional bias: basic residues; the sequence is RKGGRRGRRL.

This sequence belongs to the universal ribosomal protein uS11 family. Component of the small ribosomal subunit (SSU). Mature N.crassa ribosomes consist of a small (40S) and a large (60S) subunit. The 40S small subunit contains 1 molecule of ribosomal RNA (18S rRNA) and at least 32 different proteins. The large 60S subunit contains 3 rRNA molecules (26S, 5.8S and 5S rRNA) and at least 42 different proteins.

The protein resides in the cytoplasm. Its function is as follows. Component of the ribosome, a large ribonucleoprotein complex responsible for the synthesis of proteins in the cell. The small ribosomal subunit (SSU) binds messenger RNAs (mRNAs) and translates the encoded message by selecting cognate aminoacyl-transfer RNA (tRNA) molecules. The large subunit (LSU) contains the ribosomal catalytic site termed the peptidyl transferase center (PTC), which catalyzes the formation of peptide bonds, thereby polymerizing the amino acids delivered by tRNAs into a polypeptide chain. The nascent polypeptides leave the ribosome through a tunnel in the LSU and interact with protein factors that function in enzymatic processing, targeting, and the membrane insertion of nascent chains at the exit of the ribosomal tunnel. uS11 is involved in nucleolar processing of pre-18S ribosomal RNA and ribosome assembly. This chain is Small ribosomal subunit protein uS11 (rps-14), found in Neurospora crassa (strain ATCC 24698 / 74-OR23-1A / CBS 708.71 / DSM 1257 / FGSC 987).